We begin with the raw amino-acid sequence, 500 residues long: MNLVLNGQDLTIESIKVLIAQDQNVEICEEALSRVKQSRKIVDDIIADQETVYGITTGFGLFSDVLIDQDKYEDLQLNLIRSHACGIGEPFNDDVALVMMILRLNTMLKGHSGVSTALVEQLVFFINQRIFPVIPAQGSLGASGDLAPLSHLALALVGEGEVIYKGVRQESSKVLQSLNRAPHTLQAKEGLALINGTQAMTSQGVISYIEAEQLAYDAEWIAALTHQALNGIVDAYDAHVHIVRNSKEQLSVANRMLDWLEGSSLTTRQGELRVQDAYSLRCIPQIHGASFQVLNYVKEKLECEMNAANDNPLIFDKDDETLVISGGNFHGQPVAFALDFLKIGVSELSNVSERRIERLVNPQLNGDLPAFLSPHPGLQSGAMIMQYAAASLVSENKTLAHPASVDSIPSSANQEDHVSMGTIASRHGYQIVENVRNVLAIECVIALQAVELKGVDKLSQKTKEKYEEYREFVPSITEDRQFHKDIKVVSDYLKRSAYKK.

Positions 142–144 (ASG) form a cross-link, 5-imidazolinone (Ala-Gly). Residue Ser-143 is modified to 2,3-didehydroalanine (Ser).

It belongs to the PAL/histidase family. Contains an active site 4-methylidene-imidazol-5-one (MIO), which is formed autocatalytically by cyclization and dehydration of residues Ala-Ser-Gly.

It is found in the cytoplasm. The catalysed reaction is L-histidine = trans-urocanate + NH4(+). The protein operates within amino-acid degradation; L-histidine degradation into L-glutamate; N-formimidoyl-L-glutamate from L-histidine: step 1/3. The protein is Histidine ammonia-lyase of Macrococcus caseolyticus (strain JCSC5402) (Macrococcoides caseolyticum).